The primary structure comprises 238 residues: DNA damage-regulated autophagy modulator protein 1 (238 aa).

6 helical membrane passes run 9-29 (AFVP…SYVV), 53-73 (SGIF…TMYT), 91-111 (VFNL…GIVA), 116-136 (LAVP…GVVY), 161-181 (MVIS…ASLI), and 200-220 (VSAI…LTFI).

The protein belongs to the DRAM/TMEM150 family.

The protein resides in the lysosome membrane. Lysosomal modulator of autophagy that plays a central role in p53/TP53-mediated apoptosis. Not involved in p73/TP73-mediated autophagy. The sequence is that of DNA damage-regulated autophagy modulator protein 1 (DRAM1) from Homo sapiens (Human).